Here is a 509-residue protein sequence, read N- to C-terminus: Maturase K (509 aa).

This sequence belongs to the intron maturase 2 family. MatK subfamily.

The protein localises to the plastid. It is found in the chloroplast. Functionally, usually encoded in the trnK tRNA gene intron. Probably assists in splicing its own and other chloroplast group II introns. The polypeptide is Maturase K (Abies firma (Momi fir)).